We begin with the raw amino-acid sequence, 497 residues long: Serine hydroxymethyltransferase (497 aa).

Residues Leu-176 and 180–182 (GHL) contribute to the (6S)-5,6,7,8-tetrahydrofolate site. Lys-289 carries the post-translational modification N6-(pyridoxal phosphate)lysine. Glu-306 contributes to the (6S)-5,6,7,8-tetrahydrofolate binding site.

It belongs to the SHMT family. In terms of assembly, homodimer. Pyridoxal 5'-phosphate serves as cofactor.

It is found in the cytoplasm. The catalysed reaction is (6R)-5,10-methylene-5,6,7,8-tetrahydrofolate + glycine + H2O = (6S)-5,6,7,8-tetrahydrofolate + L-serine. Its pathway is one-carbon metabolism; tetrahydrofolate interconversion. It participates in amino-acid biosynthesis; glycine biosynthesis; glycine from L-serine: step 1/1. Its function is as follows. Catalyzes the reversible interconversion of serine and glycine with tetrahydrofolate (THF) serving as the one-carbon carrier. This reaction serves as the major source of one-carbon groups required for the biosynthesis of purines, thymidylate, methionine, and other important biomolecules. Also exhibits THF-independent aldolase activity toward beta-hydroxyamino acids, producing glycine and aldehydes, via a retro-aldol mechanism. The chain is Serine hydroxymethyltransferase from Chlamydia pneumoniae (Chlamydophila pneumoniae).